The chain runs to 258 residues: C1q-related factor (258 aa).

An N-terminal signal peptide occupies residues 1 to 16; it reads MLLVLVVLIPVLVSSG. The interval 39 to 120 is disordered; sequence GPGAGARSDG…PGSGGSGAIS (82 aa). The segment covering 67–77 has biased composition (low complexity); that stretch reads GPQGKPGRTGK. Residues 67–115 enclose the Collagen-like domain; sequence GPQGKPGRTGKPGPPGPPGDRGPPGPVGPPGEKGEPGKPGPPGLPGSGG. Over residues 78–95 the composition is skewed to pro residues; that stretch reads PGPPGPPGDRGPPGPVGP. Residues 125–258 enclose the C1q domain; that stretch reads TTVPRVAFYA…TFSGFIIYSD (134 aa).

Interacts with ADGRB3. Forms heterooligomers with C1QL4, when proteins are coexpressed; this interaction does not occur after secretion. As to expression, expressed in brainstem. More abundant in areas of the nervous system involved in motor function, such as the Purkinje cells of the cerebellum, the accessory olivary nucleus, the pons and the red nucleus.

It localises to the secreted. Its function is as follows. May regulate the number of excitatory synapses that are formed on hippocampus neurons. Has no effect on inhibitory synapses. The polypeptide is C1q-related factor (C1ql1) (Mus musculus (Mouse)).